A 25-amino-acid polypeptide reads, in one-letter code: Granule-bound starch synthase 1, chloroplastic/amyloplastic (25 aa).

Lys-16 provides a ligand contact to ADP-alpha-D-glucose.

It belongs to the glycosyltransferase 1 family. Bacterial/plant glycogen synthase subfamily. Expressed in endosperm.

The protein localises to the plastid. The protein resides in the chloroplast. It localises to the amyloplast. It catalyses the reaction an NDP-alpha-D-glucose + [(1-&gt;4)-alpha-D-glucosyl](n) = [(1-&gt;4)-alpha-D-glucosyl](n+1) + a ribonucleoside 5'-diphosphate + H(+). Its pathway is glycan biosynthesis; starch biosynthesis. Its function is as follows. Required for the synthesis of amylose in endosperm. The chain is Granule-bound starch synthase 1, chloroplastic/amyloplastic from Fagopyrum esculentum (Common buckwheat).